The chain runs to 20 residues: Large ribosomal subunit protein bL33 (20 aa).

The protein belongs to the bacterial ribosomal protein bL33 family.

The polypeptide is Large ribosomal subunit protein bL33 (rpmG) (Brevundimonas vesicularis (Pseudomonas vesicularis)).